The sequence spans 131 residues: MKFFASLSKRFAPVLSLVVLVAGTLLLSAAPASAATVQIKMGTDKYAPLYEPKALSISAGDTVEFVMNKVGPHNVIFDKVPAGESAPALSNTKLAIAPGSFYSVTLGTPGTYSFYCTPHRGAGMVGTITVE.

A signal peptide spans 1 to 34; that stretch reads MKFFASLSKRFAPVLSLVVLVAGTLLLSAAPASA. The 97-residue stretch at 35–131 folds into the Plastocyanin-like domain; it reads ATVQIKMGTD…AGMVGTITVE (97 aa). Cu cation is bound by residues H73, C116, H119, and M124.

It belongs to the plastocyanin family. Requires Cu(2+) as cofactor.

It localises to the cellular thylakoid membrane. Participates in electron transfer between P700 and the cytochrome b6-f complex in photosystem I. The protein is Plastocyanin (petE) of Prochlorothrix hollandica.